The chain runs to 571 residues: MTFRDLLSVNFEGSRSDGSAGGASAGGSGGGSGGAAASEGRAVDGVPGTAGSGGVVGAGSDENNRSSAGEPGAAGAGGEVNGTAAVGGLVVSAQGVGVGVFLAAFILMAVAGNLLVILSVACNRHLQTVTNYFIVNLAVADLLLSATVLPFSATMEVLGFWAFGRAFCDVWAAVDVLCCTASILSLCTISVDRYVGVRHSLKYPSIMTERKAAAILALLWAVAIVVSVGPLLGWKEPVPPDERFCGITEEAGYAVFSSLCSFYLPMAVIVVMYCRVYVVARSTTRSLEAGVKRERGKASEVVLRIHCRGSSTGTDRGHGAMRSTKGHTFRSSLSLRLLKFSREKKAAKTLAIVVGVFVLCWFPFFFVLPLGSLFPQLKPSEGVFKVIFWLGYFNSCVNPLIYPCSSREFKRAFLRLLRCQCHHSRRRRRPLWRAYGHHWLASNGGPRPDCAPGLGAAPREAPLALPAPEATDTPSAPEAQAPVVGRRKPPYSFRDWRLLGPFRRPTTQLRAKVSSLSQKIRAGSAPCAEAPCALRSEVEAVSLNVPHDAAEGATWQAYELADYSHLRETDI.

Residues 1–94 are Extracellular-facing; it reads MTFRDLLSVN…AVGGLVVSAQ (94 aa). The interval 13–75 is disordered; sequence GSRSDGSAGG…SSAGEPGAAG (63 aa). The segment covering 19 to 34 has biased composition (gly residues); sequence SAGGASAGGSGGGSGG. The segment covering 35–47 has biased composition (low complexity); sequence AAASEGRAVDGVP. Positions 48-57 are enriched in gly residues; sequence GTAGSGGVVG. N-linked (GlcNAc...) asparagine glycans are attached at residues Asn64 and Asn81. The chain crosses the membrane as a helical span at residues 95-120; it reads GVGVGVFLAAFILMAVAGNLLVILSV. Residues 121–132 lie on the Cytoplasmic side of the membrane; sequence ACNRHLQTVTNY. A helical membrane pass occupies residues 133–158; it reads FIVNLAVADLLLSATVLPFSATMEVL. Over 159–168 the chain is Extracellular; it reads GFWAFGRAFC. A helical transmembrane segment spans residues 169-191; that stretch reads DVWAAVDVLCCTASILSLCTISV. Over 192 to 212 the chain is Cytoplasmic; it reads DRYVGVRHSLKYPSIMTERKA. The chain crosses the membrane as a helical span at residues 213–237; sequence AAILALLWAVAIVVSVGPLLGWKEP. Residues 238–250 are Extracellular-facing; it reads VPPDERFCGITEE. Residues 251 to 274 form a helical membrane-spanning segment; that stretch reads AGYAVFSSLCSFYLPMAVIVVMYC. Topologically, residues 275 to 348 are cytoplasmic; sequence RVYVVARSTT…KFSREKKAAK (74 aa). Residues 349–373 traverse the membrane as a helical segment; that stretch reads TLAIVVGVFVLCWFPFFFVLPLGSL. Over 374–380 the chain is Extracellular; that stretch reads FPQLKPS. The helical transmembrane segment at 381-405 threads the bilayer; the sequence is EGVFKVIFWLGYFNSCVNPLIYPCS. The Cytoplasmic segment spans residues 406 to 571; sequence SREFKRAFLR…DYSHLRETDI (166 aa). Residue Cys419 is the site of S-palmitoyl cysteine attachment. Residues 465–487 are disordered; it reads LPAPEATDTPSAPEAQAPVVGRR.

This sequence belongs to the G-protein coupled receptor 1 family. Adrenergic receptor subfamily. ADRA1D sub-subfamily. Interacts with FLNA (via filamin repeat 21); increases PKA-mediated phosphorylation of FLNA. Post-translationally, palmitoylated. Palmitoylation by ZDHHC21 may increase the expression of the receptor and regulate downstream signaling.

It is found in the cell membrane. Its function is as follows. This alpha-adrenergic receptor mediates its effect through the influx of extracellular calcium. This is Alpha-1D adrenergic receptor (ADRA1D) from Sus scrofa (Pig).